We begin with the raw amino-acid sequence, 260 residues long: MHRVRSARDGIVLKYHFKEDWDETQNSPIDCIASSRLKFWKRLNFNIYLDPEVSNQNLKLLKTLTLHCDFQSPKKNLTMSKFKAMAVELIHEAFLKHIVSILSKECPLSFQPSYYSKMFNAMSNANIIAGSISRILTRESLDKSFEQSHFQLLMYKKCKLIYTRTLRKNEFDGIHKFPDLEDSKQKLQVADDEENKQYSESSLLDDSQLLCSSPPVDSTEEARTCNVEEDQDEILSVALVTTDTILSSDNFVNDMLSAAD.

Positions glutamine 197–alanine 222 are disordered. Low complexity predominate over residues serine 199 to serine 213.

This sequence belongs to the TOP6B-like family. As to quaternary structure, component of the DSB catalytic core (DSBC) complex, composed of at least rec12, rec6 and rec14. The complex interacts with mde2.

Functionally, required for formation of the rec12-mediated double-strand breaks (DSBs) that initiate meiotic recombination. May be involved primarily in the early steps of meiotic recombination. This chain is Meiotic recombination protein rec6, found in Schizosaccharomyces pombe (strain 972 / ATCC 24843) (Fission yeast).